The sequence spans 394 residues: MSKEKFERTKPHVNVGTIGHVDHGKTTLTAAITTVLAKTYGGSARAFDQIDNAPEEKARGITINTSHVEYDTPARHYAHVDCPGHADYVKNMITGAAQMDGAILVVAATDGPMPQTREHILLGRQVGVPYIIVFMNKCDMVDDEELLELVEMEVRELLSAYDFPGDDLPVVRGSALKALEGEAEWEAKIIELAGYLDSYIPEPERAIDKPFLLPIEDVFSISGRGTVVTGRVERGIVKVGEEVEIVGIKDTVKSTCTGVEMFRKLLDEGRAGENVGVLLRGIKREDIERGQVLAKPGSIKPHTTFESEVYILSKDEGGRHTPFFKGYRPQFYFRTTDVTGTIELPEGVEMVMPGDNINMIVTLIHPIAMDDGLRFAIREGGRTVGAGVVAKVIA.

The tr-type G domain maps to 10–204; it reads KPHVNVGTIG…YLDSYIPEPE (195 aa). Positions 19–26 are G1; it reads GHVDHGKT. 19–26 is a binding site for GTP; that stretch reads GHVDHGKT. Residue T26 participates in Mg(2+) binding. The segment at 60-64 is G2; the sequence is GITIN. Positions 81 to 84 are G3; sequence DCPG. Residues 81–85 and 136–139 each bind GTP; these read DCPGH and NKCD. The tract at residues 136–139 is G4; that stretch reads NKCD. Residues 174-176 are G5; that stretch reads SAL.

Belongs to the TRAFAC class translation factor GTPase superfamily. Classic translation factor GTPase family. EF-Tu/EF-1A subfamily. Monomer.

It is found in the cytoplasm. The catalysed reaction is GTP + H2O = GDP + phosphate + H(+). GTP hydrolase that promotes the GTP-dependent binding of aminoacyl-tRNA to the A-site of ribosomes during protein biosynthesis. The protein is Elongation factor Tu 2 of Yersinia pseudotuberculosis serotype O:1b (strain IP 31758).